Here is a 640-residue protein sequence, read N- to C-terminus: 1-deoxy-D-xylulose-5-phosphate synthase (640 aa).

Residues histidine 79 and 120–122 (AHS) each bind thiamine diphosphate. Aspartate 151 is a binding site for Mg(2+). Residues 152 to 153 (GA), asparagine 180, tyrosine 289, and glutamate 371 each bind thiamine diphosphate. Asparagine 180 is a Mg(2+) binding site.

The protein belongs to the transketolase family. DXPS subfamily. Homodimer. Mg(2+) is required as a cofactor. Requires thiamine diphosphate as cofactor.

The catalysed reaction is D-glyceraldehyde 3-phosphate + pyruvate + H(+) = 1-deoxy-D-xylulose 5-phosphate + CO2. The protein operates within metabolic intermediate biosynthesis; 1-deoxy-D-xylulose 5-phosphate biosynthesis; 1-deoxy-D-xylulose 5-phosphate from D-glyceraldehyde 3-phosphate and pyruvate: step 1/1. Functionally, catalyzes the acyloin condensation reaction between C atoms 2 and 3 of pyruvate and glyceraldehyde 3-phosphate to yield 1-deoxy-D-xylulose-5-phosphate (DXP). This Novosphingobium aromaticivorans (strain ATCC 700278 / DSM 12444 / CCUG 56034 / CIP 105152 / NBRC 16084 / F199) protein is 1-deoxy-D-xylulose-5-phosphate synthase.